Here is a 273-residue protein sequence, read N- to C-terminus: Eukaryotic translation initiation factor 3 subunit G-2 (273 aa).

The segment at 168–192 is disordered; it reads PPFMKDGGGGSGGKNWGRGRDRDDS. Positions 173–183 are enriched in gly residues; sequence DGGGGSGGKNW. The 79-residue stretch at 193–271 folds into the RRM domain; it reads SAVRISNLSE…LILCVEWSKP (79 aa).

Belongs to the eIF-3 subunit G family. Component of the eukaryotic translation initiation factor 3 (eIF-3) complex. The eIF-3 complex interacts with pix.

The protein resides in the cytoplasm. Functionally, RNA-binding component of the eukaryotic translation initiation factor 3 (eIF-3) complex, which is involved in protein synthesis of a specialized repertoire of mRNAs and, together with other initiation factors, stimulates binding of mRNA and methionyl-tRNAi to the 40S ribosome. The eIF-3 complex specifically targets and initiates translation of a subset of mRNAs involved in cell proliferation. This subunit can bind 18S rRNA. In Drosophila erecta (Fruit fly), this protein is Eukaryotic translation initiation factor 3 subunit G-2.